The chain runs to 170 residues: Large ribosomal subunit protein uL5 (170 aa).

The protein belongs to the universal ribosomal protein uL5 family. In terms of assembly, component of the large ribosomal subunit.

The protein localises to the nucleus. It localises to the cytoplasm. Its function is as follows. Component of the ribosome, a large ribonucleoprotein complex responsible for the synthesis of proteins in the cell. The small ribosomal subunit (SSU) binds messenger RNAs (mRNAs) and translates the encoded message by selecting cognate aminoacyl-transfer RNA (tRNA) molecules. The large subunit (LSU) contains the ribosomal catalytic site termed the peptidyl transferase center (PTC), which catalyzes the formation of peptide bonds, thereby polymerizing the amino acids delivered by tRNAs into a polypeptide chain. The nascent polypeptides leave the ribosome through a tunnel in the LSU and interact with protein factors that function in enzymatic processing, targeting, and the membrane insertion of nascent chains at the exit of the ribosomal tunnel. The chain is Large ribosomal subunit protein uL5 (RPL11) from Chlamydomonas reinhardtii (Chlamydomonas smithii).